We begin with the raw amino-acid sequence, 241 residues long: 1-(5-phosphoribosyl)-5-[(5-phosphoribosylamino)methylideneamino] imidazole-4-carboxamide isomerase (241 aa).

Catalysis depends on D10, which acts as the Proton acceptor. The active-site Proton donor is the D131.

The protein belongs to the HisA/HisF family.

It is found in the cytoplasm. It carries out the reaction 1-(5-phospho-beta-D-ribosyl)-5-[(5-phospho-beta-D-ribosylamino)methylideneamino]imidazole-4-carboxamide = 5-[(5-phospho-1-deoxy-D-ribulos-1-ylimino)methylamino]-1-(5-phospho-beta-D-ribosyl)imidazole-4-carboxamide. It participates in amino-acid biosynthesis; L-histidine biosynthesis; L-histidine from 5-phospho-alpha-D-ribose 1-diphosphate: step 4/9. The protein is 1-(5-phosphoribosyl)-5-[(5-phosphoribosylamino)methylideneamino] imidazole-4-carboxamide isomerase of Bifidobacterium adolescentis (strain ATCC 15703 / DSM 20083 / NCTC 11814 / E194a).